The sequence spans 102 residues: NADH-quinone oxidoreductase subunit K (102 aa).

3 helical membrane-spanning segments follow: residues 6–26 (LTGF…GVLA), 30–50 (ILFQ…AFIA), and 63–83 (MFVL…ALFL).

Belongs to the complex I subunit 4L family. As to quaternary structure, NDH-1 is composed of 14 different subunits. Subunits NuoA, H, J, K, L, M, N constitute the membrane sector of the complex.

It localises to the cell inner membrane. The catalysed reaction is a quinone + NADH + 5 H(+)(in) = a quinol + NAD(+) + 4 H(+)(out). Functionally, NDH-1 shuttles electrons from NADH, via FMN and iron-sulfur (Fe-S) centers, to quinones in the respiratory chain. The immediate electron acceptor for the enzyme in this species is believed to be ubiquinone. Couples the redox reaction to proton translocation (for every two electrons transferred, four hydrogen ions are translocated across the cytoplasmic membrane), and thus conserves the redox energy in a proton gradient. This Rhodopseudomonas palustris (strain BisA53) protein is NADH-quinone oxidoreductase subunit K.